We begin with the raw amino-acid sequence, 509 residues long: Aromatase (509 aa).

Cysteine 437 lines the heme pocket.

The protein belongs to the cytochrome P450 family. Heme serves as cofactor.

It is found in the membrane. The enzyme catalyses testosterone + 3 reduced [NADPH--hemoprotein reductase] + 3 O2 = 17beta-estradiol + formate + 3 oxidized [NADPH--hemoprotein reductase] + 4 H2O + 4 H(+). It catalyses the reaction androst-4-ene-3,17-dione + 3 reduced [NADPH--hemoprotein reductase] + 3 O2 = estrone + formate + 3 oxidized [NADPH--hemoprotein reductase] + 4 H2O + 4 H(+). Functionally, catalyzes the formation of aromatic C18 estrogens from C19 androgens. The chain is Aromatase (CYP19A1) from Taeniopygia guttata (Zebra finch).